The chain runs to 198 residues: Molybdopterin synthase catalytic subunit (198 aa).

A compositionally biased stretch (low complexity) spans 1–27 (MASQPPQEPTPTATSTPSTSALASLPP). Residues 1–40 (MASQPPQEPTPTATSTPSTSALASLPPHLDPTTYPRTLTS) are disordered. Residues 143-144 (HR), lysine 159, and 166-168 (KRE) contribute to the substrate site. A disordered region spans residues 176 to 198 (EWRENRERDAEGKVVAEKQEERE).

This sequence belongs to the MoaE family. MOCS2B subfamily. In terms of assembly, heterotetramer; composed of 2 small (MOCS2A) and 2 large (MOCS2B) subunits.

It is found in the cytoplasm. The catalysed reaction is 2 [molybdopterin-synthase sulfur-carrier protein]-C-terminal-Gly-aminoethanethioate + cyclic pyranopterin phosphate + H2O = molybdopterin + 2 [molybdopterin-synthase sulfur-carrier protein]-C-terminal Gly-Gly + 2 H(+). Its pathway is cofactor biosynthesis; molybdopterin biosynthesis. In terms of biological role, catalytic subunit of the molybdopterin synthase complex, a complex that catalyzes the conversion of precursor Z into molybdopterin. Acts by mediating the incorporation of 2 sulfur atoms from thiocarboxylated MOCS2A into precursor Z to generate a dithiolene group. The chain is Molybdopterin synthase catalytic subunit from Aspergillus clavatus (strain ATCC 1007 / CBS 513.65 / DSM 816 / NCTC 3887 / NRRL 1 / QM 1276 / 107).